The sequence spans 545 residues: Chaperonin GroEL 1 (545 aa).

ATP is bound by residues 30 to 33, Lys51, 87 to 91, Gly415, and Asp495; these read TLGP and DGTTT.

Belongs to the chaperonin (HSP60) family. In terms of assembly, forms a cylinder of 14 subunits composed of two heptameric rings stacked back-to-back. Interacts with the co-chaperonin GroES.

It is found in the cytoplasm. The enzyme catalyses ATP + H2O + a folded polypeptide = ADP + phosphate + an unfolded polypeptide.. Together with its co-chaperonin GroES, plays an essential role in assisting protein folding. The GroEL-GroES system forms a nano-cage that allows encapsulation of the non-native substrate proteins and provides a physical environment optimized to promote and accelerate protein folding. This chain is Chaperonin GroEL 1, found in Sinorhizobium medicae (strain WSM419) (Ensifer medicae).